The chain runs to 219 residues: Large ribosomal subunit protein uL3 (219 aa).

Positions 133-153 (GRASHGNSRSHNVPGSIGMAQ) are disordered. Position 153 is an N5-methylglutamine (Q153).

It belongs to the universal ribosomal protein uL3 family. In terms of assembly, part of the 50S ribosomal subunit. Forms a cluster with proteins L14 and L19. Post-translationally, methylated by PrmB.

Functionally, one of the primary rRNA binding proteins, it binds directly near the 3'-end of the 23S rRNA, where it nucleates assembly of the 50S subunit. The sequence is that of Large ribosomal subunit protein uL3 from Burkholderia thailandensis (strain ATCC 700388 / DSM 13276 / CCUG 48851 / CIP 106301 / E264).